A 341-amino-acid chain; its full sequence is Large ribosomal subunit protein uL10 (341 aa).

Residues 301 to 341 (EAAPAAAPAAEEKAEEEKKEEEEEKKEDQELSGLDSIFGGF) are disordered.

Belongs to the universal ribosomal protein uL10 family. In terms of assembly, part of the 50S ribosomal subunit. Forms part of the ribosomal stalk which helps the ribosome interact with GTP-bound translation factors. Forms a heptameric L10(L12)2(L12)2(L12)2 complex, where L10 forms an elongated spine to which the L12 dimers bind in a sequential fashion.

Functionally, forms part of the ribosomal stalk, playing a central role in the interaction of the ribosome with GTP-bound translation factors. The polypeptide is Large ribosomal subunit protein uL10 (Aeropyrum pernix (strain ATCC 700893 / DSM 11879 / JCM 9820 / NBRC 100138 / K1)).